We begin with the raw amino-acid sequence, 88 residues long: Mitochondrial import inner membrane translocase subunit tim9 (88 aa).

The Twin CX3C motif signature appears at 35 to 59; it reads CFTACVDDFTSKALSGRESGCISRC. 2 disulfides stabilise this stretch: C35/C59 and C39/C55.

This sequence belongs to the small Tim family. Heterohexamer; composed of 3 copies of tim9 and 3 copies of tim10, named soluble 70 kDa complex. Associates with the tim22 complex, whose core is composed of tim22 and tim54. Interacts with the transmembrane regions of multi-pass transmembrane proteins in transit.

Its subcellular location is the mitochondrion inner membrane. In terms of biological role, mitochondrial intermembrane chaperone that participates in the import and insertion of multi-pass transmembrane proteins into the mitochondrial inner membrane. Also required for the transfer of beta-barrel precursors from the TOM complex to the sorting and assembly machinery (SAM complex) of the outer membrane. Acts as a chaperone-like protein that protects the hydrophobic precursors from aggregation and guide them through the mitochondrial intermembrane space. This chain is Mitochondrial import inner membrane translocase subunit tim9 (tim9), found in Neurospora crassa (strain ATCC 24698 / 74-OR23-1A / CBS 708.71 / DSM 1257 / FGSC 987).